A 266-amino-acid chain; its full sequence is Apoptosis regulator ced-9 (266 aa).

A disordered region spans residues 1-58 (MVDSMDMANSSQNTFRRRTMATSEMREFLSTKDAEPNNFGMQTIPESPTPSTPTRRMS). Over residues 24-35 (EMREFLSTKDAE) the composition is skewed to basic and acidic residues. Positions 75 to 94 (IQGFVVDYFTYRIAQNGLDW) match the BH4 motif. The BH1 signature appears at 156 to 174 (NTPCPMSYGRLIGLISFGG). The short motif at 208–223 (SWKEHNRSWADFMKLG) is the BH2 element.

This sequence belongs to the Bcl-2 family. As to quaternary structure, interacts with asymmetric homodimer ced-4; the interaction sequesters ced-4. Interacts with egl-1; the interaction results in ced-4 release. Interacts with dre-1; the interaction inhibits ced-9 activity, either directly or indirectly. Interacts with dct-1. May form a complex composed of ced-9, ced-4 and mac-1.

The protein localises to the perikaryon. It is found in the synapse. The protein resides in the endomembrane system. Its subcellular location is the mitochondrion membrane. Its function is as follows. Plays a major role in programmed cell death (PCD, apoptosis). egl-1 binds to and directly inhibits the activity of ced-9, releasing the cell death activator ced-4 from a ced-9/ced-4 containing protein complex and allowing ced-4 to activate the cell-killing caspase ced-3. During larval development, required for the elimination of transient presynaptic components downstream of egl-1 and upstream of ced-4 and ced-3 apoptotic pathway. This Caenorhabditis briggsae protein is Apoptosis regulator ced-9 (ced-9).